A 621-amino-acid polypeptide reads, in one-letter code: 1-deoxy-D-xylulose-5-phosphate synthase (621 aa).

Thiamine diphosphate is bound by residues His-80 and 121–123 (GHS). Mg(2+) is bound at residue Asp-152. Thiamine diphosphate contacts are provided by residues 153–154 (GA), Asn-181, Tyr-288, and Glu-370. Residue Asn-181 coordinates Mg(2+).

It belongs to the transketolase family. DXPS subfamily. In terms of assembly, homodimer. Mg(2+) serves as cofactor. Requires thiamine diphosphate as cofactor.

The catalysed reaction is D-glyceraldehyde 3-phosphate + pyruvate + H(+) = 1-deoxy-D-xylulose 5-phosphate + CO2. It participates in metabolic intermediate biosynthesis; 1-deoxy-D-xylulose 5-phosphate biosynthesis; 1-deoxy-D-xylulose 5-phosphate from D-glyceraldehyde 3-phosphate and pyruvate: step 1/1. Its function is as follows. Catalyzes the acyloin condensation reaction between C atoms 2 and 3 of pyruvate and glyceraldehyde 3-phosphate to yield 1-deoxy-D-xylulose-5-phosphate (DXP). In Shewanella woodyi (strain ATCC 51908 / MS32), this protein is 1-deoxy-D-xylulose-5-phosphate synthase.